The chain runs to 172 residues: Small ribosomal subunit protein uS5 (172 aa).

The region spanning 17–80 (LREKMIAVNR…EEARRNMVKV (64 aa)) is the S5 DRBM domain.

It belongs to the universal ribosomal protein uS5 family. Part of the 30S ribosomal subunit. Contacts proteins S4 and S8.

Its function is as follows. With S4 and S12 plays an important role in translational accuracy. Located at the back of the 30S subunit body where it stabilizes the conformation of the head with respect to the body. The polypeptide is Small ribosomal subunit protein uS5 (Verminephrobacter eiseniae (strain EF01-2)).